The primary structure comprises 155 residues: Keratin-associated protein 4-7 (155 aa).

Repeat copies occupy residues 5–9 (CCGSV), 24–28 (CCRPS), 29–33 (CCQTT), 34–38 (CCRTT), 44–48 (CCVSS), 49–53 (CCRPQ), 54–58 (CCQSV), 59–63 (CCQPT), 64–68 (CCRPT), 69–73 (CCETT), 74–78 (CCHPR), 79–83 (CCISS), 84–88 (CCRPS), 89–93 (CCMSS), 94–98 (CCKPQ), 99–103 (CCQSV), 104–108 (CCQPT), 109–113 (CCRPS), 114–118 (CCRPC), and 119–123 (CCLRP). A 20 X 5 AA repeats of C-C-[GIKRQVHEML]-[SPTRV]-[STVQRCP] region spans residues 5-123 (CCGSVCSDQG…CCRPCCCLRP (119 aa)).

Belongs to the KRTAP type 4 family. In terms of assembly, interacts with hair keratins. As to expression, expressed in the hair follicles.

In the hair cortex, hair keratin intermediate filaments are embedded in an interfilamentous matrix, consisting of hair keratin-associated proteins (KRTAP), which are essential for the formation of a rigid and resistant hair shaft through their extensive disulfide bond cross-linking with abundant cysteine residues of hair keratins. The matrix proteins include the high-sulfur and high-glycine-tyrosine keratins. This is Keratin-associated protein 4-7 (KRTAP4-7) from Homo sapiens (Human).